The primary structure comprises 185 residues: uncharacterized protein (185 aa).

This is an uncharacterized protein from Escherichia coli (strain K12).